Consider the following 137-residue polypeptide: Methylglyoxal synthase (137 aa).

The region spanning 1-137 (MKIALIAHDK…DLLRGEEPNV (137 aa)) is the MGS-like domain. Substrate-binding positions include His-8, Lys-12, 34–37 (TGTT), and 54–55 (SG). Residue Asp-60 is the Proton donor/acceptor of the active site. A substrate-binding site is contributed by His-87.

This sequence belongs to the methylglyoxal synthase family.

The enzyme catalyses dihydroxyacetone phosphate = methylglyoxal + phosphate. Its function is as follows. Catalyzes the formation of methylglyoxal from dihydroxyacetone phosphate. The chain is Methylglyoxal synthase from Bacillus subtilis (strain 168).